A 453-amino-acid chain; its full sequence is tRNA (guanine-N(7)-)-methyltransferase non-catalytic subunit TRM82 (453 aa).

The disordered stretch occupies residues E69–P99. WD repeat units lie at residues P103–C143 and G244–D286.

This sequence belongs to the WD repeat TRM82 family. In terms of assembly, forms a heterodimer with the catalytic subunit TRM8.

The protein resides in the nucleus. It functions in the pathway tRNA modification; N(7)-methylguanine-tRNA biosynthesis. Functionally, required for the formation of N(7)-methylguanine at position 46 (m7G46) in tRNA. In the complex, it is required to stabilize and induce conformational changes of the catalytic subunit. This is tRNA (guanine-N(7)-)-methyltransferase non-catalytic subunit TRM82 from Vanderwaltozyma polyspora (strain ATCC 22028 / DSM 70294 / BCRC 21397 / CBS 2163 / NBRC 10782 / NRRL Y-8283 / UCD 57-17) (Kluyveromyces polysporus).